Reading from the N-terminus, the 83-residue chain is Cytochrome b559 subunit alpha (83 aa).

Residues 21-35 traverse the membrane as a helical segment; sequence VIHSITIPSLFIAGW. A heme-binding site is contributed by H23.

This sequence belongs to the PsbE/PsbF family. As to quaternary structure, heterodimer of an alpha subunit and a beta subunit. PSII is composed of 1 copy each of membrane proteins PsbA, PsbB, PsbC, PsbD, PsbE, PsbF, PsbH, PsbI, PsbJ, PsbK, PsbL, PsbM, PsbT, PsbX, PsbY, PsbZ, Psb30/Ycf12, at least 3 peripheral proteins of the oxygen-evolving complex and a large number of cofactors. It forms dimeric complexes. Requires heme b as cofactor.

It is found in the plastid. It localises to the chloroplast thylakoid membrane. Its function is as follows. This b-type cytochrome is tightly associated with the reaction center of photosystem II (PSII). PSII is a light-driven water:plastoquinone oxidoreductase that uses light energy to abstract electrons from H(2)O, generating O(2) and a proton gradient subsequently used for ATP formation. It consists of a core antenna complex that captures photons, and an electron transfer chain that converts photonic excitation into a charge separation. The polypeptide is Cytochrome b559 subunit alpha (Tupiella akineta (Green alga)).